Here is a 1794-residue protein sequence, read N- to C-terminus: Protein TIC 214 (1794 aa).

A run of 6 helical transmembrane segments spans residues 19 to 39 (IINS…FSIG), 68 to 88 (FIAG…HLAL), 91 to 111 (PHTI…WNNH), 133 to 153 (VFLN…SSML), 176 to 196 (VGWL…LVWI), and 227 to 247 (IFSI…PSPI).

It belongs to the TIC214 family. In terms of assembly, part of the Tic complex.

It localises to the plastid. It is found in the chloroplast inner membrane. Involved in protein precursor import into chloroplasts. May be part of an intermediate translocation complex acting as a protein-conducting channel at the inner envelope. This Olimarabidopsis pumila (Dwarf rocket) protein is Protein TIC 214.